We begin with the raw amino-acid sequence, 230 residues long: Uracil-DNA glycosylase (230 aa).

Catalysis depends on D65, which acts as the Proton acceptor.

This sequence belongs to the uracil-DNA glycosylase (UDG) superfamily. UNG family.

It localises to the cytoplasm. It catalyses the reaction Hydrolyzes single-stranded DNA or mismatched double-stranded DNA and polynucleotides, releasing free uracil.. Its function is as follows. Excises uracil residues from the DNA which can arise as a result of misincorporation of dUMP residues by DNA polymerase or due to deamination of cytosine. This chain is Uracil-DNA glycosylase, found in Pediococcus pentosaceus (strain ATCC 25745 / CCUG 21536 / LMG 10740 / 183-1w).